The sequence spans 157 residues: Ribosomal RNA large subunit methyltransferase H (157 aa).

S-adenosyl-L-methionine-binding positions include Leu-73, Gly-104, and 123–128; that span reads LGPLTL.

This sequence belongs to the RNA methyltransferase RlmH family. Homodimer.

Its subcellular location is the cytoplasm. The enzyme catalyses pseudouridine(1915) in 23S rRNA + S-adenosyl-L-methionine = N(3)-methylpseudouridine(1915) in 23S rRNA + S-adenosyl-L-homocysteine + H(+). Functionally, specifically methylates the pseudouridine at position 1915 (m3Psi1915) in 23S rRNA. The protein is Ribosomal RNA large subunit methyltransferase H of Xylella fastidiosa (strain M12).